The following is a 224-amino-acid chain: Pyridoxine/pyridoxamine 5'-phosphate oxidase (224 aa).

Substrate-binding positions include arginine 14 to tyrosine 17 and lysine 76. FMN-binding positions include arginine 71 to lysine 76, tyrosine 86 to threonine 87, arginine 92, lysine 93, and glutamine 115. Positions 133, 137, and 141 each coordinate substrate. FMN-binding positions include glutamine 150–serine 151 and tryptophan 196. Position 202-204 (arginine 202–histidine 204) interacts with substrate. Residue arginine 206 participates in FMN binding.

Belongs to the pyridoxamine 5'-phosphate oxidase family. In terms of assembly, homodimer. FMN is required as a cofactor.

It catalyses the reaction pyridoxamine 5'-phosphate + O2 + H2O = pyridoxal 5'-phosphate + H2O2 + NH4(+). It carries out the reaction pyridoxine 5'-phosphate + O2 = pyridoxal 5'-phosphate + H2O2. It functions in the pathway cofactor metabolism; pyridoxal 5'-phosphate salvage; pyridoxal 5'-phosphate from pyridoxamine 5'-phosphate: step 1/1. It participates in cofactor metabolism; pyridoxal 5'-phosphate salvage; pyridoxal 5'-phosphate from pyridoxine 5'-phosphate: step 1/1. Its function is as follows. Catalyzes the oxidation of either pyridoxine 5'-phosphate (PNP) or pyridoxamine 5'-phosphate (PMP) into pyridoxal 5'-phosphate (PLP). The sequence is that of Pyridoxine/pyridoxamine 5'-phosphate oxidase from Streptomyces avermitilis (strain ATCC 31267 / DSM 46492 / JCM 5070 / NBRC 14893 / NCIMB 12804 / NRRL 8165 / MA-4680).